Reading from the N-terminus, the 113-residue chain is Probable 4-amino-4-deoxy-L-arabinose-phosphoundecaprenol flippase subunit ArnE (113 aa).

3 helical membrane-spanning segments follow: residues 39-59 (IFWLITAIAMLGFGMLFWLRL), 62-82 (ILPLSIAYPMLSINFIVVTLI), and 91-111 (VNVKHWVGIASIMLGIVLMSM). The 70-residue stretch at 42–111 (LITAIAMLGF…IMLGIVLMSM (70 aa)) folds into the EamA domain.

This sequence belongs to the ArnE family. Heterodimer of ArnE and ArnF.

The protein localises to the cell inner membrane. Its pathway is bacterial outer membrane biogenesis; lipopolysaccharide biosynthesis. Its function is as follows. Translocates 4-amino-4-deoxy-L-arabinose-phosphoundecaprenol (alpha-L-Ara4N-phosphoundecaprenol) from the cytoplasmic to the periplasmic side of the inner membrane. This is Probable 4-amino-4-deoxy-L-arabinose-phosphoundecaprenol flippase subunit ArnE from Proteus mirabilis (strain HI4320).